Reading from the N-terminus, the 37-residue chain is Large ribosomal subunit protein bL36 (37 aa).

Belongs to the bacterial ribosomal protein bL36 family.

This is Large ribosomal subunit protein bL36 from Paracidovorax citrulli (strain AAC00-1) (Acidovorax citrulli).